The sequence spans 561 residues: Efflux pump bfoC (561 aa).

Positions 1–55 are disordered; that stretch reads MSDTARILGGPSASSSRDGGMELNSFTEVSQTNSRSHSTKEEEGQVDDQQRPARE. Polar residues predominate over residues 24–36; sequence NSFTEVSQTNSRS. Over residues 38–55 the composition is skewed to basic and acidic residues; that stretch reads STKEEEGQVDDQQRPARE. A run of 13 helical transmembrane segments spans residues 59–79, 103–123, 128–148, 164–184, 194–214, 222–242, 257–277, 293–313, 335–355, 378–398, 425–445, 457–477, and 530–550; these read GVLG…CIFC, DVGW…LTFG, FFPI…GSFI, VAGL…SQCV, GFIM…GGAF, WCFY…LFTF, AVGL…CLLL, VVAL…LQLW, LYGF…PIWF, VVFA…GPFM, IGYQ…PIFV, TATA…VSVA, and VHTF…ATVI.

Belongs to the major facilitator superfamily. TCR/Tet family.

Its subcellular location is the cell membrane. Efflux pump; part of the gene cluster that mediates the biosynthesis of bifonsecin B, a dimeric gamma-naphthopyrone. This Aspergillus brasiliensis (strain CBS 101740 / IMI 381727 / IBT 21946) protein is Efflux pump bfoC.